The chain runs to 122 residues: Large ribosomal subunit protein uL14 (122 aa).

It belongs to the universal ribosomal protein uL14 family. Part of the 50S ribosomal subunit. Forms a cluster with proteins L3 and L19. In the 70S ribosome, L14 and L19 interact and together make contacts with the 16S rRNA in bridges B5 and B8.

Functionally, binds to 23S rRNA. Forms part of two intersubunit bridges in the 70S ribosome. The chain is Large ribosomal subunit protein uL14 from Streptococcus equi subsp. equi (strain 4047).